The chain runs to 220 residues: Orotidine 5'-phosphate decarboxylase (220 aa).

Substrate contacts are provided by residues Asp12, Lys34, 60 to 69, Ser117, 170 to 180, Gly193, and Arg194; these read DFKVADIPNT and PGVGAQGGKAS. Lys62 (proton donor) is an active-site residue.

This sequence belongs to the OMP decarboxylase family. Type 1 subfamily. In terms of assembly, homodimer.

The enzyme catalyses orotidine 5'-phosphate + H(+) = UMP + CO2. The protein operates within pyrimidine metabolism; UMP biosynthesis via de novo pathway; UMP from orotate: step 2/2. Catalyzes the decarboxylation of orotidine 5'-monophosphate (OMP) to uridine 5'-monophosphate (UMP). The sequence is that of Orotidine 5'-phosphate decarboxylase from Methanosarcina mazei (strain ATCC BAA-159 / DSM 3647 / Goe1 / Go1 / JCM 11833 / OCM 88) (Methanosarcina frisia).